The primary structure comprises 301 residues: Probable alpha-L-glutamate ligase (301 aa).

Positions 104-287 constitute an ATP-grasp domain; sequence LQLLSRRGIG…VAGIIIEHLE (184 aa). ATP is bound by residues lysine 141, 178-179, aspartate 187, and 211-213; these read EY and RSN. Mg(2+) contacts are provided by aspartate 248, glutamate 260, and asparagine 262. Residues aspartate 248, glutamate 260, and asparagine 262 each contribute to the Mn(2+) site.

It belongs to the RimK family. Mg(2+) serves as cofactor. It depends on Mn(2+) as a cofactor.

This Pseudomonas fluorescens (strain SBW25) protein is Probable alpha-L-glutamate ligase.